The primary structure comprises 392 residues: GDSL esterase/lipase ESM1 (392 aa).

A signal peptide spans 1 to 28 (MADNLNLVSVLGVLLVLTIFHNPIIVYA). S43 (nucleophile) is an active-site residue. N146, N166, and N290 each carry an N-linked (GlcNAc...) asparagine glycan. Active-site residues include D324 and H327.

It belongs to the 'GDSL' lipolytic enzyme family.

The protein resides in the secreted. In terms of biological role, represses or inhibits nitriles production from methionine-derived and from indol-3-ylmethyl glucosinolates. Favors isothiocyanate production. The polypeptide is GDSL esterase/lipase ESM1 (ESM1) (Arabidopsis thaliana (Mouse-ear cress)).